The chain runs to 254 residues: Phosphoribosylaminoimidazole-succinocarboxamide synthase (254 aa).

It belongs to the SAICAR synthetase family.

The enzyme catalyses 5-amino-1-(5-phospho-D-ribosyl)imidazole-4-carboxylate + L-aspartate + ATP = (2S)-2-[5-amino-1-(5-phospho-beta-D-ribosyl)imidazole-4-carboxamido]succinate + ADP + phosphate + 2 H(+). It participates in purine metabolism; IMP biosynthesis via de novo pathway; 5-amino-1-(5-phospho-D-ribosyl)imidazole-4-carboxamide from 5-amino-1-(5-phospho-D-ribosyl)imidazole-4-carboxylate: step 1/2. This chain is Phosphoribosylaminoimidazole-succinocarboxamide synthase, found in Acidiphilium cryptum (strain JF-5).